The sequence spans 251 residues: Ubiquinone/menaquinone biosynthesis C-methyltransferase UbiE (251 aa).

Residues threonine 74, aspartate 95, and 123–124 each bind S-adenosyl-L-methionine; that span reads NA.

The protein belongs to the class I-like SAM-binding methyltransferase superfamily. MenG/UbiE family.

It carries out the reaction a 2-demethylmenaquinol + S-adenosyl-L-methionine = a menaquinol + S-adenosyl-L-homocysteine + H(+). The enzyme catalyses a 2-methoxy-6-(all-trans-polyprenyl)benzene-1,4-diol + S-adenosyl-L-methionine = a 5-methoxy-2-methyl-3-(all-trans-polyprenyl)benzene-1,4-diol + S-adenosyl-L-homocysteine + H(+). It functions in the pathway quinol/quinone metabolism; menaquinone biosynthesis; menaquinol from 1,4-dihydroxy-2-naphthoate: step 2/2. It participates in cofactor biosynthesis; ubiquinone biosynthesis. Methyltransferase required for the conversion of demethylmenaquinol (DMKH2) to menaquinol (MKH2) and the conversion of 2-polyprenyl-6-methoxy-1,4-benzoquinol (DDMQH2) to 2-polyprenyl-3-methyl-6-methoxy-1,4-benzoquinol (DMQH2). The sequence is that of Ubiquinone/menaquinone biosynthesis C-methyltransferase UbiE from Edwardsiella ictaluri (strain 93-146).